Here is a 303-residue protein sequence, read N- to C-terminus: Oxygen-dependent coproporphyrinogen-III oxidase (303 aa).

S93 contributes to the substrate binding site. A divalent metal cation contacts are provided by H97 and H107. H107 serves as the catalytic Proton donor. 109 to 111 (NVR) lines the substrate pocket. The a divalent metal cation site is built by H149 and H179. Positions 244 to 279 (YVEFNLVFDRGTLFGLQSGGRTESILLSMPPMAQWR) are important for dimerization. 262-264 (GGR) contributes to the substrate binding site.

The protein belongs to the aerobic coproporphyrinogen-III oxidase family. In terms of assembly, homodimer. The cofactor is a divalent metal cation.

It localises to the cytoplasm. It catalyses the reaction coproporphyrinogen III + O2 + 2 H(+) = protoporphyrinogen IX + 2 CO2 + 2 H2O. It functions in the pathway porphyrin-containing compound metabolism; protoporphyrin-IX biosynthesis; protoporphyrinogen-IX from coproporphyrinogen-III (O2 route): step 1/1. Its function is as follows. Involved in the heme biosynthesis. Catalyzes the aerobic oxidative decarboxylation of propionate groups of rings A and B of coproporphyrinogen-III to yield the vinyl groups in protoporphyrinogen-IX. The sequence is that of Oxygen-dependent coproporphyrinogen-III oxidase from Bordetella petrii (strain ATCC BAA-461 / DSM 12804 / CCUG 43448).